We begin with the raw amino-acid sequence, 324 residues long: Protoheme IX farnesyltransferase (324 aa).

9 consecutive transmembrane segments (helical) span residues 31 to 51 (LIVL…RGEV), 53 to 73 (PVLA…ANTI), 104 to 124 (LVFA…CANL), 125 to 145 (LSAC…THWL), 153 to 173 (IVIG…AVTG), 181 to 201 (VLFA…AMLI), 222 to 242 (TAWQ…LLVY), 243 to 263 (PLHA…VVFI), and 285 to 305 (FSIL…LPLT).

Belongs to the UbiA prenyltransferase family. Protoheme IX farnesyltransferase subfamily.

It is found in the cell inner membrane. The enzyme catalyses heme b + (2E,6E)-farnesyl diphosphate + H2O = Fe(II)-heme o + diphosphate. Its pathway is porphyrin-containing compound metabolism; heme O biosynthesis; heme O from protoheme: step 1/1. In terms of biological role, converts heme B (protoheme IX) to heme O by substitution of the vinyl group on carbon 2 of heme B porphyrin ring with a hydroxyethyl farnesyl side group. This Cyanothece sp. (strain PCC 7425 / ATCC 29141) protein is Protoheme IX farnesyltransferase.